Consider the following 29-residue polypeptide: Cytochrome b6-f complex subunit 8 (29 aa).

A helical transmembrane segment spans residues 3-23 (IDVLGWVALLVVFTWSIAMVV).

The protein belongs to the PetN family. The 4 large subunits of the cytochrome b6-f complex are cytochrome b6, subunit IV (17 kDa polypeptide, PetD), cytochrome f and the Rieske protein, while the 4 small subunits are PetG, PetL, PetM and PetN. The complex functions as a dimer.

It localises to the cellular thylakoid membrane. Its function is as follows. Component of the cytochrome b6-f complex, which mediates electron transfer between photosystem II (PSII) and photosystem I (PSI), cyclic electron flow around PSI, and state transitions. In Mastigocladus laminosus (Fischerella sp.), this protein is Cytochrome b6-f complex subunit 8.